Here is a 240-residue protein sequence, read N- to C-terminus: NADPH-flavin oxidoreductase (240 aa).

FMN-binding positions include 11 to 15 (HRSIR), Ser39, 67 to 69 (QAY), 128 to 131 (YIGG), and 167 to 169 (KPR).

Belongs to the flavin oxidoreductase frp family. As to quaternary structure, homodimer.

It catalyses the reaction FMNH2 + NADP(+) = FMN + NADPH + 2 H(+). In terms of biological role, catalyzes the NADPH-dependent reduction of FMN to FMNH(2). Involved in bioluminescence by providing FMNH(2) to luciferase. The sequence is that of NADPH-flavin oxidoreductase from Vibrio harveyi (Beneckea harveyi).